We begin with the raw amino-acid sequence, 98 residues long: uncharacterized protein (98 aa).

The disordered stretch occupies residues 58–98 (ARFPVEDTAGGLLRTGGHRPQISDEEVSKRHHEQSHGQEDH).

This is an uncharacterized protein from Saccharomyces cerevisiae (strain ATCC 204508 / S288c) (Baker's yeast).